A 95-amino-acid chain; its full sequence is MASIEIPLHEIIRKLERMNQKKQAQRKRHKLNRKERGHKSPSEQRRSELWHARQVELSAINSDNSSDEGTTLCRFDTFGSKSDAICDRSDWCLDQ.

Positions 8 to 18 are homotetramerization; sequence LHEIIRKLERM. Positions 8–40 form a coiled coil; it reads LHEIIRKLERMNQKKQAQRKRHKLNRKERGHKS. Positions 16–49 are disordered; the sequence is ERMNQKKQAQRKRHKLNRKERGHKSPSEQRRSEL. Residues 23 to 37 are compositionally biased toward basic residues; sequence QAQRKRHKLNRKERG. The short motif at 26–30 is the Nuclear localization signal element; that stretch reads RKRHK. Basic and acidic residues predominate over residues 38–49; sequence HKSPSEQRRSEL.

Belongs to the cucumovirus/ilarvirus protein 2b family. As to quaternary structure, homodimer. Homotetramer (dimer of dimers).

It is found in the host nucleus. Functionally, acts as a suppressor of RNA-mediated gene silencing, also known as post-transcriptional gene silencing (PTGS), a mechanism of plant viral defense that limits the accumulation of viral RNAs. Forms a homodimer to measure siRNA duplex in a length-preference mode. Binds to both siRNA duplexes (19bp) and long siRNA duplexes (30bp). This is Suppressor of silencing 2b from Canna (Florist's daisy).